The chain runs to 322 residues: N-acetyl-gamma-glutamyl-phosphate reductase (322 aa).

Residue cysteine 132 is part of the active site.

This sequence belongs to the NAGSA dehydrogenase family. Type 1 subfamily.

Its subcellular location is the cytoplasm. The enzyme catalyses N-acetyl-L-glutamate 5-semialdehyde + phosphate + NADP(+) = N-acetyl-L-glutamyl 5-phosphate + NADPH + H(+). It participates in amino-acid biosynthesis; L-arginine biosynthesis; N(2)-acetyl-L-ornithine from L-glutamate: step 3/4. Functionally, catalyzes the NADPH-dependent reduction of N-acetyl-5-glutamyl phosphate to yield N-acetyl-L-glutamate 5-semialdehyde. This Bacteroides fragilis (strain YCH46) protein is N-acetyl-gamma-glutamyl-phosphate reductase.